A 463-amino-acid chain; its full sequence is Quinolone resistance protein NorB (463 aa).

14 consecutive transmembrane segments (helical) span residues 17–37 (IGIV…VNVV), 53–73 (IAVS…GGLA), 86–106 (IILN…LLLI), 107–127 (IGRL…LSII), 142–162 (YWSI…GAVA), 165–185 (LGWR…LFLI), 201–221 (FDIK…ILIT), 230–250 (SLLF…FIVL), 273–293 (TASN…NTFV), 299–319 (YSSL…LIMI), 334–354 (PMLI…LTFL), 357–377 (ILYV…LGIY), 403–423 (MASA…YAIV), and 435–455 (IALW…LLLV).

This sequence belongs to the major facilitator superfamily. TCR/Tet family.

The protein resides in the cell membrane. In terms of biological role, multidrug efflux pump that acts independently of NorA and is one of the factors that confers resistance against diverse quinolones and chemical compounds. In Staphylococcus aureus (strain Mu3 / ATCC 700698), this protein is Quinolone resistance protein NorB (norB).